Consider the following 332-residue polypeptide: L-lactate dehydrogenase A chain (332 aa).

NAD(+) is bound by residues 29–57 (GAVG…VEDK) and R99. Positions 106, 138, and 169 each coordinate substrate. NAD(+) is bound at residue N138. The active-site Proton acceptor is H193. T248 is a substrate binding site.

Belongs to the LDH/MDH superfamily. LDH family. In terms of assembly, homotetramer.

Its subcellular location is the cytoplasm. The catalysed reaction is (S)-lactate + NAD(+) = pyruvate + NADH + H(+). It participates in fermentation; pyruvate fermentation to lactate; (S)-lactate from pyruvate: step 1/1. Interconverts simultaneously and stereospecifically pyruvate and lactate with concomitant interconversion of NADH and NAD(+). This Python regius (Ball python) protein is L-lactate dehydrogenase A chain (LDHA).